A 204-amino-acid chain; its full sequence is Colicin-A (204 aa).

A run of 2 helical transmembrane segments spans residues 139–161 (SWVLSGIASSVALGIFSATLGAY) and 165–187 (LGVPAIAVGIAGILLAAVVGALI).

The protein belongs to the channel forming colicin family.

It localises to the cell membrane. Functionally, this colicin is a channel-forming colicin. This class of transmembrane toxins depolarize the cytoplasmic membrane, leading to dissipation of cellular energy. Its function is as follows. Colicins are polypeptide toxins produced by and active against E.coli and closely related bacteria. In Escherichia coli, this protein is Colicin-A (caa).